We begin with the raw amino-acid sequence, 268 residues long: Undecaprenyl-diphosphatase (268 aa).

Transmembrane regions (helical) follow at residues 47–67 (FTILIQLGAILAILALYFAKL), 83–103 (FVIGVLVAFLPAAVIGALAGG), 109–129 (LFNPWVVCFSLIVGGAILLWV), 144–164 (FPLPMYLYIGCAQCLAMIPGV), 184–204 (AAEFSFFLAIPTMVGAFVYDL), 217–237 (LIVAIGFAVSFVTAIIVVKSF), and 246–266 (FTLFAWWRVIVGTLGLIALAL).

Belongs to the UppP family.

The protein localises to the cell inner membrane. The catalysed reaction is di-trans,octa-cis-undecaprenyl diphosphate + H2O = di-trans,octa-cis-undecaprenyl phosphate + phosphate + H(+). Functionally, catalyzes the dephosphorylation of undecaprenyl diphosphate (UPP). Confers resistance to bacitracin. The chain is Undecaprenyl-diphosphatase from Rhodopseudomonas palustris (strain BisB18).